Consider the following 183-residue polypeptide: uncharacterized protein (183 aa).

The chain crosses the membrane as a helical span at residues 7 to 23; that stretch reads LFFTALCFGLTGCIAPP.

Its subcellular location is the membrane. This is an uncharacterized protein from Haemophilus influenzae (strain ATCC 51907 / DSM 11121 / KW20 / Rd).